The sequence spans 160 residues: Large ribosomal subunit protein eL21B (160 aa).

Lys-32 participates in a covalent cross-link: Glycyl lysine isopeptide (Lys-Gly) (interchain with G-Cter in ubiquitin).

This sequence belongs to the eukaryotic ribosomal protein eL21 family. Component of the large ribosomal subunit (LSU). Mature yeast ribosomes consist of a small (40S) and a large (60S) subunit. The 40S small subunit contains 1 molecule of ribosomal RNA (18S rRNA) and 33 different proteins (encoded by 57 genes). The large 60S subunit contains 3 rRNA molecules (25S, 5.8S and 5S rRNA) and 46 different proteins (encoded by 81 genes).

The protein localises to the cytoplasm. Its function is as follows. Component of the ribosome, a large ribonucleoprotein complex responsible for the synthesis of proteins in the cell. The small ribosomal subunit (SSU) binds messenger RNAs (mRNAs) and translates the encoded message by selecting cognate aminoacyl-transfer RNA (tRNA) molecules. The large subunit (LSU) contains the ribosomal catalytic site termed the peptidyl transferase center (PTC), which catalyzes the formation of peptide bonds, thereby polymerizing the amino acids delivered by tRNAs into a polypeptide chain. The nascent polypeptides leave the ribosome through a tunnel in the LSU and interact with protein factors that function in enzymatic processing, targeting, and the membrane insertion of nascent chains at the exit of the ribosomal tunnel. This Saccharomyces cerevisiae (strain ATCC 204508 / S288c) (Baker's yeast) protein is Large ribosomal subunit protein eL21B.